The following is a 476-amino-acid chain: Bridging integrator 2 (476 aa).

In terms of domain architecture, BAR spans 26 to 242 (VLQKLGKTVE…MGKLDKQHSS (217 aa)). Disordered regions lie at residues 269 to 369 (YPCP…TEGA) and 395 to 476 (GAAP…LTPL). Polar residues predominate over residues 279–292 (EPSSGAEQTPTSPR). Pro residues predominate over residues 310-324 (PAEPGAPMPGPPPAS). The segment covering 325-339 (PTSVRSASESESECS) has biased composition (low complexity). Basic and acidic residues predominate over residues 340 to 353 (GESREIDLSPKEME). Polar residues predominate over residues 461 to 476 (VSCNPPQDPSESLTPL).

It localises to the cytoplasm. The polypeptide is Bridging integrator 2 (BIN2) (Gallus gallus (Chicken)).